The chain runs to 788 residues: Protein translocase subunit SecA 2 (788 aa).

Residues Q86, G104–T108, and D493 contribute to the ATP site.

The protein belongs to the SecA family. In terms of assembly, monomer and homodimer. Part of the essential Sec protein translocation apparatus which comprises SecA, SecYEG and auxiliary proteins SecDF. Other proteins may also be involved.

It is found in the cell membrane. It localises to the cytoplasm. It carries out the reaction ATP + H2O + cellular proteinSide 1 = ADP + phosphate + cellular proteinSide 2.. Functionally, part of the Sec protein translocase complex. Interacts with the SecYEG preprotein conducting channel. Has a central role in coupling the hydrolysis of ATP to the transfer of proteins into and across the cell membrane, serving as an ATP-driven molecular motor driving the stepwise translocation of polypeptide chains across the membrane. The protein is Protein translocase subunit SecA 2 of Bacillus thuringiensis (strain Al Hakam).